We begin with the raw amino-acid sequence, 491 residues long: Glutamyl-tRNA(Gln) amidotransferase subunit A (491 aa).

Active-site charge relay system residues include Lys-77 and Ser-152. Ser-176 (acyl-ester intermediate) is an active-site residue.

The protein belongs to the amidase family. GatA subfamily. In terms of assembly, heterotrimer of A, B and C subunits.

It catalyses the reaction L-glutamyl-tRNA(Gln) + L-glutamine + ATP + H2O = L-glutaminyl-tRNA(Gln) + L-glutamate + ADP + phosphate + H(+). In terms of biological role, allows the formation of correctly charged Gln-tRNA(Gln) through the transamidation of misacylated Glu-tRNA(Gln) in organisms which lack glutaminyl-tRNA synthetase. The reaction takes place in the presence of glutamine and ATP through an activated gamma-phospho-Glu-tRNA(Gln). This is Glutamyl-tRNA(Gln) amidotransferase subunit A from Chlamydia abortus (strain DSM 27085 / S26/3) (Chlamydophila abortus).